The sequence spans 375 residues: MAVTEASLLRQCPLLLPQNRSKTVYEGFISAQGRDFHLRIVLPEDLQLKNARLLCSWQLRTILSGYHRIVQQRMQHSPDLMSFMMELKMLLEVALKNRQELYALPPPPQFYSSLIEEIGTLGWDKLVYADTCFSTIKLKAEDASGREHLITLKLKAKYPAESPDYFVDFPVPFCASWTPQSSLISIYSQFLAAIESLKAFWDVMDEIDEKTWVLEPEKPPRSATARRIALGNNVSINIEVDPRHPTMLPECFFLGADHVVKPLGIKLSRNIHLWDPENSVLQNLKDVLEIDFPARAILEKSDFTMDCGICYAYQLDGTIPDQVCDNSQCGQPFHQICLYEWLRGLLTSRQSFNIIFGECPYCSKPITLKMSGRKH.

The residue at position 2 (alanine 2) is an N-acetylalanine. Positions 104 to 294 are UBC-RWD region (URD); the sequence is LPPPPQFYSS…KDVLEIDFPA (191 aa). Positions 307, 310, 324, 329, 334, 337, 359, and 362 each coordinate Zn(2+). The segment at 307-363 adopts an RING-type; degenerate zinc-finger fold; sequence CGICYAYQLDGTIPDQVCDNSQCGQPFHQICLYEWLRGLLTSRQSFNIIFGECPYCS.

As to quaternary structure, interacts with GGN. Belongs to the multisubunit FA complex composed of FANCA, FANCB, FANCC, FANCE, FANCF, FANCG, FANCL/PHF9 and FANCM. The complex is not found in FA patients. In complex with FANCF, FANCA and FANCG, but not with FANCC, nor FANCE, interacts with HES1; this interaction may be essential for the stability and nuclear localization of FA core complex proteins. Interacts with FANCI. Directly interacts (via the RING-type zinc finger) with UBE2T and UBE2W. Post-translationally, the RING-type zinc finger domain is monoubiquitinated in the presence of UBE2T and UBE2W.

It localises to the cytoplasm. The protein localises to the nucleus. The enzyme catalyses S-ubiquitinyl-[E2 ubiquitin-conjugating enzyme]-L-cysteine + [acceptor protein]-L-lysine = [E2 ubiquitin-conjugating enzyme]-L-cysteine + N(6)-ubiquitinyl-[acceptor protein]-L-lysine.. It functions in the pathway protein modification; protein ubiquitination. In terms of biological role, ubiquitin ligase protein that mediates monoubiquitination of FANCD2 in the presence of UBE2T, a key step in the DNA damage pathway. Also mediates monoubiquitination of FANCI. May stimulate the ubiquitin release from UBE2W. May be required for proper primordial germ cell proliferation in the embryonic stage, whereas it is probably not needed for spermatogonial proliferation after birth. The sequence is that of E3 ubiquitin-protein ligase FANCL (FANCL) from Homo sapiens (Human).